Reading from the N-terminus, the 185-residue chain is Ribosome-recycling factor (185 aa).

Positions 137–159 are disordered; it reads EDLKADEKAKDISEDDRKRMEDE.

This sequence belongs to the RRF family.

It is found in the cytoplasm. Its function is as follows. Responsible for the release of ribosomes from messenger RNA at the termination of protein biosynthesis. May increase the efficiency of translation by recycling ribosomes from one round of translation to another. The chain is Ribosome-recycling factor from Erythrobacter litoralis (strain HTCC2594).